A 313-amino-acid polypeptide reads, in one-letter code: Glucosyl-dolichyl phosphate glucuronosyltransferase (313 aa).

A helical transmembrane segment spans residues 284-304 (LIAIFVFTAAVGFGYVYGLLT).

The protein belongs to the glycosyltransferase 2 family.

It is found in the cell membrane. It catalyses the reaction an archaeal dolichyl alpha-D-glucosyl phosphate + UDP-alpha-D-glucuronate = an archaeal dolichyl beta-D-glucuronosyl-(1-&gt;4)-alpha-D-glucosyl phosphate + UDP + H(+). It functions in the pathway cell surface structure biogenesis; S-layer biogenesis. In terms of biological role, involved in the protein N-glycosylation pathway responsible for the assembly and attachment of an N-linked pentasaccharide that decorates the S-layer glycoprotein and flagellins. Catalyzes the transfer of a glucuronate residue (GlcA) to a glucose residue already bound to a dolichol phosphate (DolP), a compound that serves as a glycan lipid carrier in Archaea. In vitro, is able to add GlcA to DolP-Glc in which the omega-position isoprene is not saturated. However, the likely physiological lipid substrate is alpha,omega-saturated. This Haloferax volcanii (strain ATCC 29605 / DSM 3757 / JCM 8879 / NBRC 14742 / NCIMB 2012 / VKM B-1768 / DS2) (Halobacterium volcanii) protein is Glucosyl-dolichyl phosphate glucuronosyltransferase.